Reading from the N-terminus, the 252-residue chain is Large ribosomal subunit protein uL10m (252 aa).

A mitochondrion-targeting transit peptide spans 1 to 24 (MAATLCCRLLPKAGWVPLTQSVRH).

This sequence belongs to the universal ribosomal protein uL10 family. In terms of assembly, component of the mitochondrial ribosome large subunit (39S) which comprises a 16S rRNA and about 50 distinct proteins.

Its subcellular location is the mitochondrion. The chain is Large ribosomal subunit protein uL10m (mrpl10) from Danio rerio (Zebrafish).